The primary structure comprises 619 residues: Dihydroxy-acid dehydratase (619 aa).

Residue Asp-81 participates in Mg(2+) binding. Cys-122 provides a ligand contact to [2Fe-2S] cluster. Mg(2+) is bound by residues Asp-123 and Lys-124. Residue Lys-124 is modified to N6-carboxylysine. Cys-195 provides a ligand contact to [2Fe-2S] cluster. Glu-494 contributes to the Mg(2+) binding site. Ser-520 serves as the catalytic Proton acceptor.

It belongs to the IlvD/Edd family. In terms of assembly, homodimer. The cofactor is [2Fe-2S] cluster. Mg(2+) serves as cofactor.

The catalysed reaction is (2R)-2,3-dihydroxy-3-methylbutanoate = 3-methyl-2-oxobutanoate + H2O. It carries out the reaction (2R,3R)-2,3-dihydroxy-3-methylpentanoate = (S)-3-methyl-2-oxopentanoate + H2O. It functions in the pathway amino-acid biosynthesis; L-isoleucine biosynthesis; L-isoleucine from 2-oxobutanoate: step 3/4. Its pathway is amino-acid biosynthesis; L-valine biosynthesis; L-valine from pyruvate: step 3/4. Functions in the biosynthesis of branched-chain amino acids. Catalyzes the dehydration of (2R,3R)-2,3-dihydroxy-3-methylpentanoate (2,3-dihydroxy-3-methylvalerate) into 2-oxo-3-methylpentanoate (2-oxo-3-methylvalerate) and of (2R)-2,3-dihydroxy-3-methylbutanoate (2,3-dihydroxyisovalerate) into 2-oxo-3-methylbutanoate (2-oxoisovalerate), the penultimate precursor to L-isoleucine and L-valine, respectively. The chain is Dihydroxy-acid dehydratase from Shewanella putrefaciens (strain CN-32 / ATCC BAA-453).